The following is a 274-amino-acid chain: Thiamine kinase (274 aa).

This sequence belongs to the thiamine kinase family.

The enzyme catalyses thiamine + ATP = thiamine phosphate + ADP + H(+). Its pathway is cofactor biosynthesis; thiamine diphosphate biosynthesis; thiamine phosphate from thiamine: step 1/1. Its function is as follows. Catalyzes the ATP-dependent phosphorylation of thiamine to thiamine phosphate. Is involved in thiamine salvage. The protein is Thiamine kinase of Escherichia coli O6:K15:H31 (strain 536 / UPEC).